The primary structure comprises 285 residues: Secreted LysM effector slp2 (285 aa).

A signal peptide spans 1–16 (MLPITVVTLFAALAAA). The disordered stretch occupies residues 75-143 (GDAAKAGDAA…KGGDAAKGGN (69 aa)). The segment covering 85 to 116 (KGGDAKGGDAKGGDAKGGDAKGGKGGDAKGGK) has biased composition (basic and acidic residues). Residues 117 to 139 (GGDAAKGGKGGDAAKGGKGGDAA) are compositionally biased toward gly residues. LysM domains are found at residues 157 to 201 (VEHK…VLKI) and 237 to 281 (FTRV…TINL).

It belongs to the secreted LysM effector family.

In terms of biological role, might have a role in sequestration of chitin oligosaccharides (breakdown products of fungal cell walls that are released during invasion and act as triggers of host immunity) to dampen host defense. This Pyricularia oryzae (strain 70-15 / ATCC MYA-4617 / FGSC 8958) (Rice blast fungus) protein is Secreted LysM effector slp2.